The sequence spans 293 residues: Succinate--CoA ligase [ADP-forming] subunit alpha (293 aa).

Residues 21–24, Lys47, and 99–101 contribute to the CoA site; these read TGKQ and ITE. Tyr162 lines the substrate pocket. The Tele-phosphohistidine intermediate role is filled by His249.

Belongs to the succinate/malate CoA ligase alpha subunit family. In terms of assembly, heterotetramer of two alpha and two beta subunits.

It carries out the reaction succinate + ATP + CoA = succinyl-CoA + ADP + phosphate. It catalyses the reaction GTP + succinate + CoA = succinyl-CoA + GDP + phosphate. It functions in the pathway carbohydrate metabolism; tricarboxylic acid cycle; succinate from succinyl-CoA (ligase route): step 1/1. In terms of biological role, succinyl-CoA synthetase functions in the citric acid cycle (TCA), coupling the hydrolysis of succinyl-CoA to the synthesis of either ATP or GTP and thus represents the only step of substrate-level phosphorylation in the TCA. The alpha subunit of the enzyme binds the substrates coenzyme A and phosphate, while succinate binding and nucleotide specificity is provided by the beta subunit. The protein is Succinate--CoA ligase [ADP-forming] subunit alpha of Methanothermobacter thermautotrophicus (strain ATCC 29096 / DSM 1053 / JCM 10044 / NBRC 100330 / Delta H) (Methanobacterium thermoautotrophicum).